The following is a 137-amino-acid chain: Large ribosomal subunit protein uL16 (137 aa).

It belongs to the universal ribosomal protein uL16 family. As to quaternary structure, part of the 50S ribosomal subunit.

Binds 23S rRNA and is also seen to make contacts with the A and possibly P site tRNAs. The chain is Large ribosomal subunit protein uL16 from Streptococcus equi subsp. zooepidemicus (strain H70).